We begin with the raw amino-acid sequence, 78 residues long: Large ribosomal subunit protein bL28 (78 aa).

It belongs to the bacterial ribosomal protein bL28 family.

The sequence is that of Large ribosomal subunit protein bL28 from Gloeothece citriformis (strain PCC 7424) (Cyanothece sp. (strain PCC 7424)).